A 290-amino-acid polypeptide reads, in one-letter code: uncharacterized protein (290 aa).

The next 5 helical transmembrane spans lie at 14–34 (ALLN…IGIL), 82–102 (ISSL…LIGG), 115–135 (NLIA…IYLY), 158–174 (DAFV…SSQL), and 176–196 (LPWV…KTAW).

It belongs to the cation diffusion facilitator (CDF) transporter (TC 2.A.4) family.

Its subcellular location is the cell membrane. This is an uncharacterized protein from Bacillus subtilis (strain 168).